We begin with the raw amino-acid sequence, 554 residues long: Methyl-coenzyme M reductase II subunit alpha (554 aa).

Q151 contributes to the coenzyme F430 binding site. Residues R229, 260-261 (KH), and R274 contribute to the coenzyme B site. Residues Y336 and Y447 each contribute to the coenzyme M site.

It belongs to the methyl-coenzyme M reductase alpha subunit family. As to quaternary structure, MCR is a hexamer of two alpha, two beta, and two gamma chains, forming a dimer of heterotrimers. The cofactor is coenzyme F430.

The enzyme catalyses coenzyme B + methyl-coenzyme M = methane + coenzyme M-coenzyme B heterodisulfide. The protein operates within one-carbon metabolism; methyl-coenzyme M reduction; methane from methyl-coenzyme M: step 1/1. In terms of biological role, component of the methyl-coenzyme M reductase (MCR) I that catalyzes the reductive cleavage of methyl-coenzyme M (CoM-S-CH3 or 2-(methylthio)ethanesulfonate) using coenzyme B (CoB or 7-mercaptoheptanoylthreonine phosphate) as reductant which results in the production of methane and the mixed heterodisulfide of CoB and CoM (CoM-S-S-CoB). This is the final step in methanogenesis. This is Methyl-coenzyme M reductase II subunit alpha (mrtA) from Methanothermus fervidus (strain ATCC 43054 / DSM 2088 / JCM 10308 / V24 S).